Here is a 381-residue protein sequence, read N- to C-terminus: Sulfofructose kinase (381 aa).

Residues glycine 10, 72 to 73 (RY), and 100 to 103 (GNGT) each bind ATP. Asparagine 101 provides a ligand contact to Mg(2+). Aspartate 131 serves as the catalytic Proton acceptor.

Belongs to the phosphofructokinase type A (PFKA) family. It depends on Mg(2+) as a cofactor.

The catalysed reaction is 6-deoxy-6-sulfo-D-fructose + ATP = 6-deoxy-6-sulfo-D-fructose 1-phosphate + ADP + H(+). Its function is as follows. Part of the sulfo-EMP2 pathway, a D-sulfoquinovose degradation pathway that produces sulfolactate (SL). Phosphorylates 6-deoxy-6-sulfo-D-fructose (SF) to 6-deoxy-6-sulfo-D-fructose 1-phosphate (SFP). The protein is Sulfofructose kinase of Alkalicoccus urumqiensis (Bacillus urumqiensis).